A 330-amino-acid polypeptide reads, in one-letter code: Peroxidase 70 (330 aa).

An N-terminal signal peptide occupies residues M1–A24. Cystine bridges form between C43–C119, C76–C81, C125–C326, and C202–C234. H74 functions as the Proton acceptor in the catalytic mechanism. The Ca(2+) site is built by D75, V78, G80, D82, and S84. P165 is a binding site for substrate. H195 provides a ligand contact to heme b. A Ca(2+)-binding site is contributed by T196. Ca(2+) contacts are provided by D247, S250, and D255.

The protein belongs to the peroxidase family. Classical plant (class III) peroxidase subfamily. Heme b is required as a cofactor. It depends on Ca(2+) as a cofactor.

The protein resides in the secreted. It catalyses the reaction 2 a phenolic donor + H2O2 = 2 a phenolic radical donor + 2 H2O. Functionally, removal of H(2)O(2), oxidation of toxic reductants, biosynthesis and degradation of lignin, suberization, auxin catabolism, response to environmental stresses such as wounding, pathogen attack and oxidative stress. These functions might be dependent on each isozyme/isoform in each plant tissue. This is Peroxidase 70 (PER70) from Arabidopsis thaliana (Mouse-ear cress).